Consider the following 159-residue polypeptide: UPF0756 membrane protein PTH_1668 (159 aa).

The next 4 helical transmembrane spans lie at 15–37 (ILITLLFLGLFGRSNLVVSSSCI), 61–81 (LGLVLLMLHILSPVATEKLTI), 117–137 (PEIIFGLTVGTVLGILFLRGT), and 138–158 (PCGPVMAAAVTAVFLQIASLF).

It belongs to the UPF0756 family.

Its subcellular location is the cell membrane. The sequence is that of UPF0756 membrane protein PTH_1668 from Pelotomaculum thermopropionicum (strain DSM 13744 / JCM 10971 / SI).